The sequence spans 419 residues: UDP-N-acetylglucosamine 1-carboxyvinyltransferase (419 aa).

22–23 (KN) provides a ligand contact to phosphoenolpyruvate. R93 lines the UDP-N-acetyl-alpha-D-glucosamine pocket. The active-site Proton donor is the C117. C117 bears the 2-(S-cysteinyl)pyruvic acid O-phosphothioketal mark. D306 and I328 together coordinate UDP-N-acetyl-alpha-D-glucosamine.

It belongs to the EPSP synthase family. MurA subfamily.

It localises to the cytoplasm. It catalyses the reaction phosphoenolpyruvate + UDP-N-acetyl-alpha-D-glucosamine = UDP-N-acetyl-3-O-(1-carboxyvinyl)-alpha-D-glucosamine + phosphate. Its pathway is cell wall biogenesis; peptidoglycan biosynthesis. Functionally, cell wall formation. Adds enolpyruvyl to UDP-N-acetylglucosamine. This is UDP-N-acetylglucosamine 1-carboxyvinyltransferase from Vesicomyosocius okutanii subsp. Calyptogena okutanii (strain HA).